Here is a 154-residue protein sequence, read N- to C-terminus: PTTG1IP family member 2 (154 aa).

Positions 1–26 (MCWLRAWGQILLPVFLSLFLIQLLIS) are cleaved as a signal peptide. Over 27–97 (FSENGFIHSP…SIYWLNCKVD (71 aa)) the chain is Extracellular. The helical transmembrane segment at 98–118 (MFGIMMLLLIAVLITGFVWYC) threads the bilayer. The Cytoplasmic segment spans residues 119-154 (CAYHFYLQDLNRNRVYFYGRRETVPIHDRSATVYDE).

It is found in the membrane. In Homo sapiens (Human), this protein is PTTG1IP family member 2.